The sequence spans 332 residues: Cyclin-D1-binding protein 1 (332 aa).

A2 is subject to N-acetylalanine. 2 interaction with TCF3 regions span residues 2–184 (ASAT…VDFV) and 150–332 (ISYN…CLLD). Interaction with RPLP0 regions lie at residues 2–190 (ASAT…AHEE) and 240–332 (LIIP…CLLD). The required for interaction with CCND1 stretch occupies residues 2–208 (ASATAPAAAA…DPYSGLLNDT (207 aa)).

This sequence belongs to the CCNDBP1 family. As to quaternary structure, interacts with CCND1 and GRAP2. May also interact with COPS5, RPLP0, SIRT6, SYF2 and TCF3. In terms of processing, phosphorylated.

It is found in the cytoplasm. Its subcellular location is the nucleus. Its function is as follows. May negatively regulate cell cycle progression. May act at least in part via inhibition of the cyclin-D1/CDK4 complex, thereby preventing phosphorylation of RB1 and blocking E2F-dependent transcription. The chain is Cyclin-D1-binding protein 1 (CCNDBP1) from Macaca fascicularis (Crab-eating macaque).